Reading from the N-terminus, the 1453-residue chain is Leucine-rich repeat-containing protein 9 (1453 aa).

LRR repeat units follow at residues 53–78 (FPNL…CLQL), 97–119 (CRNL…LEKL), 120–141 (IKLK…LQTL), 142–164 (KNLK…LDSN), 166–188 (QLER…NLTR), 224–248 (LQRF…AMKK), and 264–287 (KEDL…RVKL). The disordered stretch occupies residues 302–321 (LKGSGKGHSDGSNNSKVTDP). LRR repeat units lie at residues 344 to 367 (LNAL…IYHI), 671 to 693 (KARP…TSVY), 694 to 715 (SHIV…LSKL), 716 to 737 (TGLR…VYHL), 739 to 758 (NLEY…GFRG), 759 to 784 (LMKL…MLCK), 786 to 812 (TTSL…VIGR), 886 to 908 (YLKI…LEKL), 909 to 930 (ENLK…LESC), 931 to 952 (INLE…ISKM), 953 to 975 (TKLT…TFDN), 976 to 1001 (MLHL…SFTL), 1023 to 1048 (LCNL…LFVI), 1092 to 1115 (FKQM…PVDQ), 1116 to 1138 (FRNV…LIYL), 1139 to 1161 (PNVK…LKPQ), 1201 to 1224 (MHSL…QLNR), 1225 to 1247 (LRNL…LDNL), 1248 to 1270 (VVLQ…AFAK), 1272 to 1292 (SSLL…KLQS), 1293 to 1317 (LVKL…KLDV), 1319 to 1345 (STLR…IFRL), and 1365 to 1388 (EFHL…PMDG).

This is Leucine-rich repeat-containing protein 9 (LRRC9) from Homo sapiens (Human).